The chain runs to 125 residues: MKTSAYNVYLGVVAAMLALLFVTINAAPMEADDETAENTLVAHPDGDMELSGPWDAINTAALRKLLLQLDAEDRMGGVTRSWPQAEPRGWGLRALDSRLARQWRADKRQVRFRQCYFNPISCFRK.

An N-terminal signal peptide occupies residues 1 to 26 (MKTSAYNVYLGVVAAMLALLFVTINA). The propeptide occupies 27–106 (APMEADDETA…SRLARQWRAD (80 aa)). At glutamine 109 the chain carries Pyrrolidone carboxylic acid.

It belongs to the allatostatin family.

Its subcellular location is the secreted. In terms of biological role, strongly inhibits juvenile hormone biosynthesis in vitro by the corpora allata from fifth-stadium larvae and adult females. The sequence is that of Allatostatin from Spodoptera frugiperda (Fall armyworm).